A 279-amino-acid chain; its full sequence is Probable nicotinate-nucleotide pyrophosphorylase [carboxylating] (279 aa).

Substrate-binding positions include R90, 125–127 (TRK), R149, K159, E189, D210, 238–240 (SGG), and 259–261 (MGF).

Belongs to the NadC/ModD family. Hexamer formed by 3 homodimers.

It carries out the reaction nicotinate beta-D-ribonucleotide + CO2 + diphosphate = quinolinate + 5-phospho-alpha-D-ribose 1-diphosphate + 2 H(+). It participates in cofactor biosynthesis; NAD(+) biosynthesis; nicotinate D-ribonucleotide from quinolinate: step 1/1. In terms of biological role, involved in the catabolism of quinolinic acid (QA). This is Probable nicotinate-nucleotide pyrophosphorylase [carboxylating] (nadC) from Methanothermobacter thermautotrophicus (strain ATCC 29096 / DSM 1053 / JCM 10044 / NBRC 100330 / Delta H) (Methanobacterium thermoautotrophicum).